Reading from the N-terminus, the 506-residue chain is Cysteine--tRNA ligase (506 aa).

Cysteine 34 is a binding site for Zn(2+). The 'HIGH' region signature appears at 36 to 46; sequence PTVYDFAHIGN. Zn(2+) is bound by residues cysteine 230, histidine 269, and glutamate 273. The 'KMSKS' region signature appears at 302-306; the sequence is KMSKS. Lysine 305 provides a ligand contact to ATP.

It belongs to the class-I aminoacyl-tRNA synthetase family. As to quaternary structure, monomer. Zn(2+) is required as a cofactor.

Its subcellular location is the cytoplasm. The catalysed reaction is tRNA(Cys) + L-cysteine + ATP = L-cysteinyl-tRNA(Cys) + AMP + diphosphate. The sequence is that of Cysteine--tRNA ligase from Brucella ovis (strain ATCC 25840 / 63/290 / NCTC 10512).